The chain runs to 893 residues: MNYVGQLAGQVLVTVKELYKGINQATLSGCIDVVVVRQQDGSYQCSPFHVRFGKLGVLRSKEKVIDIEINGSAVDLHMKLGDNGEAFFVEETEEEYEKLPAYLATSPIPTEDQFFKHIETPLVKSSGNERPAQSSDVSHTLESEAVFTQSSVKKKKRRRKKCKQDNRKEEQAASPVAEDVGDVGVSSDDEKRAQAARGSSNASLKEEDYKEPSLFHSGDNYPLSDGDWSPLETTYPQAVCPKSDSELEVKPSESLLRSEPHMEWTWGGFPESTKVTKRERYDYHPRTATITPSENTHFRVIPSEDSLIREVEKDATVEDTTCTIVKPKPRALCKQLSDAASTELPESPLEAPQISSLLDADPVPSPSAEAPSEPKPAAKDSPTKKKGVHKRSQHQGPDDIYLDDLKALEPEVAALYFPKSDTDPGSRQWPESDTFSGSQSPQSVGSAAADSGTECLSDSAMDLPDVTLSLCGGLSENGEISKEKFMEHIITYHEFAENPGLIDNPNLVIRIYNRYYNWALAAPMILSLQVFQKSLPKATVESWVKDKMPKKSGRWWFWRKKESMIKQLPETKEGKSEVPPANDLPSNAEEPTSARPAENDTSSDEGSQELEESIKVDPITVETLSHCGTASYKKSLRLSSDQIAKLKLHDGPNDVVFSITTQYQGTCRCAGTIYLWNWNDKVIISDIDGTITKSDALGQILPQLGKDWTHQGIARLYHSINENGYKFLYCSARAIGMADMTRGYLHWVNDKGTILPRGPLMLSPSSLFSAFHREVIEKKPEKFKIECLNDIKNLFAPSRQPFYAAFGNRPNDVYAYTQVGVPDCRIFTVNPKGELIQERTKGNKSSYHRLSELVEHVFPLLSKEQNSAFPCPEFSSFCYWRDPIPDLDLDDLA.

The segment at 1-108 is N-LIP; it reads MNYVGQLAGQ…LPAYLATSPI (108 aa). Residue Ser106 is modified to Phosphoserine. The interval 122 to 216 is disordered; that stretch reads LVKSSGNERP…EDYKEPSLFH (95 aa). Residues 123–151 show a composition bias toward polar residues; it reads VKSSGNERPAQSSDVSHTLESEAVFTQSS. Basic residues predominate over residues 152–162; that stretch reads VKKKKRRRKKC. Positions 153 to 158 match the Nuclear localization signal motif; that stretch reads KKKKRR. A phosphoserine mark is found at Ser174, Ser186, and Ser187. Residues 204 to 213 show a composition bias toward basic and acidic residues; it reads LKEEDYKEPS. A phosphoserine mark is found at Ser243 and Ser303. Disordered stretches follow at residues 357–400 and 417–456; these read LLDA…PDDI and FPKS…TECL. Residues 360 to 371 show a composition bias toward low complexity; that stretch reads ADPVPSPSAEAP. Basic residues predominate over residues 384–393; that stretch reads KKKGVHKRSQ. A compositionally biased stretch (polar residues) spans 423-445; it reads DPGSRQWPESDTFSGSQSPQSVG. Phosphoserine is present on Ser563. Positions 568-611 are disordered; that stretch reads LPETKEGKSEVPPANDLPSNAEEPTSARPAENDTSSDEGSQELE. Over residues 601-611 the composition is skewed to acidic residues; the sequence is TSSDEGSQELE. Positions 632–834 are C-LIP; it reads YKKSLRLSSD…RIFTVNPKGE (203 aa). The DXDXT motif signature appears at 686 to 690; it reads DIDGT. The LXXIL motif signature appears at 697–701; that stretch reads LGQIL.

This sequence belongs to the lipin family. Mg(2+) is required as a cofactor. In terms of tissue distribution, expressed at high level in liver and to some extend in lung, kidney, placenta, spleen, thymus, lymph node, prostate, testes, small intestine, and colon. Expressed also in circulating red blood cells and site of lymphopoiesis.

It is found in the nucleus. The protein localises to the cytoplasm. Its subcellular location is the cytosol. It localises to the endoplasmic reticulum membrane. The catalysed reaction is a 1,2-diacyl-sn-glycero-3-phosphate + H2O = a 1,2-diacyl-sn-glycerol + phosphate. Inhibited by N-ethylmaleimide. Its function is as follows. Acts as a magnesium-dependent phosphatidate phosphatase enzyme which catalyzes the conversion of phosphatidic acid to diacylglycerol during triglyceride, phosphatidylcholine and phosphatidylethanolamine biosynthesis in the endoplasmic reticulum membrane. Plays important roles in controlling the metabolism of fatty acids at different levels. Also acts as a nuclear transcriptional coactivator for PPARGC1A to modulate lipid metabolism. The chain is Phosphatidate phosphatase LPIN2 from Mus musculus (Mouse).